The chain runs to 201 residues: Proteasome subunit beta 1 (201 aa).

Positions Met-1 to Gly-10 are cleaved as a propeptide — removed in mature form; by autocatalysis. Thr-11 functions as the Nucleophile in the catalytic mechanism.

It belongs to the peptidase T1B family. In terms of assembly, the 20S proteasome core is composed of 14 alpha and 14 beta subunits that assemble into four stacked heptameric rings, resulting in a barrel-shaped structure. The two inner rings, each composed of seven catalytic beta subunits, are sandwiched by two outer rings, each composed of seven alpha subunits. The catalytic chamber with the active sites is on the inside of the barrel. Has a gated structure, the ends of the cylinder being occluded by the N-termini of the alpha-subunits. Is capped at one or both ends by the proteasome regulatory ATPase, PAN.

Its subcellular location is the cytoplasm. It carries out the reaction Cleavage of peptide bonds with very broad specificity.. The formation of the proteasomal ATPase PAN-20S proteasome complex, via the docking of the C-termini of PAN into the intersubunit pockets in the alpha-rings, triggers opening of the gate for substrate entry. Interconversion between the open-gate and close-gate conformations leads to a dynamic regulation of the 20S proteasome proteolysis activity. Component of the proteasome core, a large protease complex with broad specificity involved in protein degradation. The sequence is that of Proteasome subunit beta 1 from Thermococcus gammatolerans (strain DSM 15229 / JCM 11827 / EJ3).